A 253-amino-acid polypeptide reads, in one-letter code: NAD-dependent protein deacetylase (253 aa).

Residues 3 to 253 (APSLSSGVEQ…GETLGPFVGN (251 aa)) enclose the Deacetylase sirtuin-type domain. The NAD(+) site is built by alanine 29, threonine 33, phenylalanine 40, arginine 41, glutamine 106, isoleucine 108, aspartate 109, and histidine 126. Phenylalanine 40 is a binding site for nicotinamide. Nicotinamide contacts are provided by isoleucine 108 and aspartate 109. Catalysis depends on histidine 126, which acts as the Proton acceptor. Residues cysteine 134, cysteine 137, cysteine 159, and cysteine 162 each coordinate Zn(2+). 5 residues coordinate NAD(+): serine 200, serine 201, asparagine 225, aspartate 242, and isoleucine 243.

Belongs to the sirtuin family. Class U subfamily. Zn(2+) serves as cofactor.

It is found in the cytoplasm. The enzyme catalyses N(6)-acetyl-L-lysyl-[protein] + NAD(+) + H2O = 2''-O-acetyl-ADP-D-ribose + nicotinamide + L-lysyl-[protein]. In terms of biological role, NAD-dependent protein deacetylase which modulates the activities of several enzymes which are inactive in their acetylated form. This chain is NAD-dependent protein deacetylase, found in Rhodopseudomonas palustris (strain ATCC BAA-98 / CGA009).